A 93-amino-acid polypeptide reads, in one-letter code: MSIPNLSSVTQLLSIATGLVSTNNPVVVPVVTQILSVVSQLLSGTPASVVLPILQGLIPLLTNFPLILIQLLSVIAGLQGLPVPSSFSPDYKV.

The N-terminal stretch at 1-22 (MSIPNLSSVTQLLSIATGLVST) is a signal peptide. Residue Asn5 is glycosylated (N-linked (GlcNAc...) asparagine; by host).

This is an uncharacterized protein from Invertebrate iridescent virus 6 (IIV-6).